The following is a 284-amino-acid chain: Type II methyltransferase M1.LlaDCHI (284 aa).

S-adenosyl-L-methionine contacts are provided by W17, K21, D62, and D194.

The protein belongs to the N(4)/N(6)-methyltransferase family.

It catalyses the reaction a 2'-deoxyadenosine in DNA + S-adenosyl-L-methionine = an N(6)-methyl-2'-deoxyadenosine in DNA + S-adenosyl-L-homocysteine + H(+). In terms of biological role, an alpha subtype methylase, recognizes the double-stranded sequence 5'-GATC-3', methylates A-2 on both strands, and protects the DNA from cleavage by the LlaDCHI endonuclease. The protein is Type II methyltransferase M1.LlaDCHI of Lactococcus lactis subsp. cremoris (Streptococcus cremoris).